Consider the following 108-residue polypeptide: Phosphocarrier protein HPr (108 aa).

Residues 21 to 108 (ELQATCIVKN…DAFSSGFGEL (88 aa)) form the HPr domain. His-35 functions as the Pros-phosphohistidine intermediate in the catalytic mechanism.

The protein belongs to the HPr family.

Its subcellular location is the cytoplasm. Its function is as follows. General (non sugar-specific) component of the phosphoenolpyruvate-dependent sugar phosphotransferase system (sugar PTS). This major carbohydrate active-transport system catalyzes the phosphorylation of incoming sugar substrates concomitantly with their translocation across the cell membrane. The phosphoryl group from phosphoenolpyruvate (PEP) is transferred to the phosphoryl carrier protein HPr by enzyme I. Phospho-HPr then transfers it to the PTS EIIA domain. The polypeptide is Phosphocarrier protein HPr (ptsH) (Chlamydia pneumoniae (Chlamydophila pneumoniae)).